The following is a 295-amino-acid chain: MQGRKAMLVLHGKQAMNEDVRSAVGDLRDSGWVLDVRVTWEAGDAQRLVAEALAAGYSHIVAGGGDGTLRDVAEAMGLAATQASLALLPLGTANDFAKAAGIPLEPASALALLNVAPQPIDLGQAGDQLFLNMATGGFGSQVTANTSEDLKKVLGAAAYLFTGLSRFSELQAASVELQGPGFHWQGDLLALGIGNGRQAGGGQVLCPEAMVNDGLLDVAILPAPQEVVGALRDLLGGDGLFVRARLPWVEIKSSQGLDINLDGEPLQAANLRFQARPAALHLHLPAGSPLLSHPG.

One can recognise a DAGKc domain in the interval 1–129; sequence MQGRKAMLVL…IDLGQAGDQL (129 aa). ATP is bound by residues Thr-39, 65–71, and Thr-92; that span reads GDGTLRD. Residues Met-210, Asp-213, and Leu-215 each contribute to the Mg(2+) site. Residue Glu-264 is the Proton acceptor of the active site.

Belongs to the diacylglycerol/lipid kinase family. YegS lipid kinase subfamily. Mg(2+) is required as a cofactor. It depends on Ca(2+) as a cofactor.

The protein resides in the cytoplasm. In terms of biological role, probably phosphorylates lipids; the in vivo substrate is unknown. This chain is Probable lipid kinase YegS-like, found in Pseudomonas putida (strain ATCC 47054 / DSM 6125 / CFBP 8728 / NCIMB 11950 / KT2440).